The following is a 440-amino-acid chain: Argininosuccinate lyase (440 aa).

It belongs to the lyase 1 family. Argininosuccinate lyase subfamily.

It is found in the cytoplasm. The catalysed reaction is 2-(N(omega)-L-arginino)succinate = fumarate + L-arginine. The protein operates within amino-acid biosynthesis; L-arginine biosynthesis; L-arginine from L-ornithine and carbamoyl phosphate: step 3/3. In Clostridium botulinum (strain ATCC 19397 / Type A), this protein is Argininosuccinate lyase.